Reading from the N-terminus, the 140-residue chain is Cytochrome c oxidase subunit 6, mitochondrial (140 aa).

The protein belongs to the cytochrome c oxidase subunit 5A family. Component of the cytochrome c oxidase (complex IV, CIV), a multisubunit enzyme composed of a catalytic core of 3 subunits and several supernumerary subunits. The complex exists as a monomer or a dimer and forms supercomplexes (SCs) in the inner mitochondrial membrane with ubiquinol-cytochrome c oxidoreductase (cytochrome b-c1 complex, complex III, CIII).

Its subcellular location is the mitochondrion inner membrane. Its pathway is energy metabolism; oxidative phosphorylation. In terms of biological role, component of the cytochrome c oxidase, the last enzyme in the mitochondrial electron transport chain which drives oxidative phosphorylation. The respiratory chain contains 3 multisubunit complexes succinate dehydrogenase (complex II, CII), ubiquinol-cytochrome c oxidoreductase (cytochrome b-c1 complex, complex III, CIII) and cytochrome c oxidase (complex IV, CIV), that cooperate to transfer electrons derived from NADH and succinate to molecular oxygen, creating an electrochemical gradient over the inner membrane that drives transmembrane transport and the ATP synthase. Cytochrome c oxidase is the component of the respiratory chain that catalyzes the reduction of oxygen to water. Electrons originating from reduced cytochrome c in the intermembrane space (IMS) are transferred via the dinuclear copper A center (CU(A)) of subunit 2 and heme A of subunit 1 to the active site in subunit 1, a binuclear center (BNC) formed by heme A3 and copper B (CU(B)). The BNC reduces molecular oxygen to 2 water molecules using 4 electrons from cytochrome c in the IMS and 4 protons from the mitochondrial matrix. The chain is Cytochrome c oxidase subunit 6, mitochondrial (cox6) from Schizosaccharomyces pombe (strain 972 / ATCC 24843) (Fission yeast).